A 343-amino-acid polypeptide reads, in one-letter code: Anthranilate phosphoribosyltransferase (343 aa).

5-phospho-alpha-D-ribose 1-diphosphate contacts are provided by residues glycine 84, 87-88, threonine 92, 94-97, 112-120, and serine 124; these read GD, NIST, and KHGNRSVSS. Glycine 84 contributes to the anthranilate binding site. Residue serine 96 coordinates Mg(2+). Residue asparagine 115 participates in anthranilate binding. Arginine 170 provides a ligand contact to anthranilate. Aspartate 229 and glutamate 230 together coordinate Mg(2+).

Belongs to the anthranilate phosphoribosyltransferase family. In terms of assembly, homodimer. It depends on Mg(2+) as a cofactor.

The catalysed reaction is N-(5-phospho-beta-D-ribosyl)anthranilate + diphosphate = 5-phospho-alpha-D-ribose 1-diphosphate + anthranilate. The protein operates within amino-acid biosynthesis; L-tryptophan biosynthesis; L-tryptophan from chorismate: step 2/5. In terms of biological role, catalyzes the transfer of the phosphoribosyl group of 5-phosphorylribose-1-pyrophosphate (PRPP) to anthranilate to yield N-(5'-phosphoribosyl)-anthranilate (PRA). This is Anthranilate phosphoribosyltransferase from Stenotrophomonas maltophilia (strain K279a).